The chain runs to 893 residues: Alanine--tRNA ligase (893 aa).

Belongs to the class-II aminoacyl-tRNA synthetase family.

The protein localises to the cytoplasm. The enzyme catalyses tRNA(Ala) + L-alanine + ATP = L-alanyl-tRNA(Ala) + AMP + diphosphate. Its function is as follows. Catalyzes the attachment of alanine to tRNA(Ala) in a two-step reaction: alanine is first activated by ATP to form Ala-AMP and then transferred to the acceptor end of tRNA(Ala). Also edits incorrectly charged Ser-tRNA(Ala) and Gly-tRNA(Ala) via its editing domain. The polypeptide is Alanine--tRNA ligase (alaS) (Leuconostoc mesenteroides subsp. mesenteroides (strain ATCC 8293 / DSM 20343 / BCRC 11652 / CCM 1803 / JCM 6124 / NCDO 523 / NBRC 100496 / NCIMB 8023 / NCTC 12954 / NRRL B-1118 / 37Y)).